The sequence spans 173 residues: Small ribosomal subunit protein uS5 (173 aa).

The S5 DRBM domain occupies 18–81 (LREKMIAVNR…EQARRGMFKV (64 aa)).

This sequence belongs to the universal ribosomal protein uS5 family. In terms of assembly, part of the 30S ribosomal subunit. Contacts proteins S4 and S8.

With S4 and S12 plays an important role in translational accuracy. In terms of biological role, located at the back of the 30S subunit body where it stabilizes the conformation of the head with respect to the body. The protein is Small ribosomal subunit protein uS5 of Bordetella avium (strain 197N).